The following is a 441-amino-acid chain: Deoxyguanosinetriphosphate triphosphohydrolase-like protein (441 aa).

Residues 59-250 form the HD domain; sequence RLTHSLEVSQ…MELADDTAYA (192 aa).

The protein belongs to the dGTPase family. Type 2 subfamily.

This is Deoxyguanosinetriphosphate triphosphohydrolase-like protein from Shewanella loihica (strain ATCC BAA-1088 / PV-4).